We begin with the raw amino-acid sequence, 382 residues long: L-lysine 4-hydroxylase (382 aa).

Positions 182, 184, and 318 each coordinate Fe cation.

This sequence belongs to the clavaminate synthase family. Requires Fe(2+) as cofactor.

It carries out the reaction L-lysine + 2-oxoglutarate + O2 = (4R)-4-hydroxy-L-lysine + succinate + CO2. In terms of biological role, alpha-ketoglutarate-dependent dioxygenase that in vitro catalyzes the regio- and stereoselective hydroxylation of L-lysine, leading to (4R)-4-hydroxy-L-lysine. Cannot use D-lysine or L-ornithine as substrate. This chain is L-lysine 4-hydroxylase, found in Chitinophaga pinensis (strain ATCC 43595 / DSM 2588 / LMG 13176 / NBRC 15968 / NCIMB 11800 / UQM 2034).